The primary structure comprises 190 residues: Somatotropin (190 aa).

His-19 is a binding site for Zn(2+). An intrachain disulfide couples Cys-52 to Cys-163. Position 172 (Glu-172) interacts with Zn(2+). Cys-180 and Cys-188 are oxidised to a cystine.

Belongs to the somatotropin/prolactin family.

It localises to the secreted. Its function is as follows. Growth hormone plays an important role in growth control and involved in the regulation of several anabolic processes. This is Somatotropin (GH) from Crocodylus novaeguineae (Crocodile).